A 533-amino-acid chain; its full sequence is Protein disulfide isomerase-like 1-5 (533 aa).

A signal peptide spans 1 to 22 (MRARRVVAAAAVLLLFAVVAVA). 2 consecutive Thioredoxin domains span residues 51–196 (LGGG…KDQT) and 387–516 (LLEG…EKLQ). The active-site Nucleophile is the C97. N151 carries an N-linked (GlcNAc...) asparagine glycan. Active-site nucleophile residues include C436 and C439. The cysteines at positions 436 and 439 are disulfide-linked. Positions 530–533 (KDEL) match the Prevents secretion from ER motif.

Belongs to the protein disulfide isomerase family.

It localises to the endoplasmic reticulum lumen. The catalysed reaction is Catalyzes the rearrangement of -S-S- bonds in proteins.. Acts as a protein-folding catalyst that interacts with nascent polypeptides to catalyze the formation, isomerization, and reduction or oxidation of disulfide bonds. May play a role in storage protein biogenesis. The polypeptide is Protein disulfide isomerase-like 1-5 (PDIL1-5) (Oryza sativa subsp. japonica (Rice)).